The primary structure comprises 462 residues: WD repeat-containing protein WRAP73 (462 aa).

4 WD repeats span residues 46–86, 89–129, 176–210, and 221–260; these read TCLD…WHCK, EGSA…VSYI, TDTQDLTGIEWAPNGCVLAAWDTCLEYKVLLYSLD, and EWSLGIKSVAWSPSSQFLAIGSYDGKVRLLNHVTWKMITE. The residue at position 281 (serine 281) is a Phosphoserine. WD repeat units lie at residues 328–369 and 371–410; these read NPRM…LFVV and EHMSPVRSFQWDPQQPRLAICTGGSKVYLWSPAGCVSVQV.

In terms of assembly, interacts with SSX2IP. In terms of tissue distribution, ubiquitous.

Its subcellular location is the cytoplasm. It is found in the cytoskeleton. The protein resides in the microtubule organizing center. The protein localises to the centrosome. Its function is as follows. The SSX2IP:WRAP73 complex is proposed to act as regulator of spindle anchoring at the mitotic centrosome. Required for the centrosomal localization of SSX2IP and normal mitotic bipolar spindle morphology. Required for the targeting of centriole satellite proteins to centrosomes such as of PCM1, SSX2IP, CEP290 and PIBF1/CEP90. Required for ciliogenesis and involved in the removal of the CEP97:CCP110 complex from the mother centriole. Involved in ciliary vesicle formation at the mother centriole and required for the docking of vesicles to the basal body during ciliogenesis; may promote docking of RAB8A- and ARL13B-containing vesicles. This Mus musculus (Mouse) protein is WD repeat-containing protein WRAP73 (Wrap73).